Here is a 263-residue protein sequence, read N- to C-terminus: Fructose-bisphosphate aldolase class 1 (263 aa).

Substrate-binding positions include 24–25, histidine 29, aspartate 33, and tryptophan 144; that span reads DH. The active-site Proton donor is the tyrosine 146. Substrate is bound by residues arginine 148, 177-179, 202-204, and 231-232; these read KIK, SGG, and GR. Catalysis depends on lysine 177, which acts as the Schiff-base intermediate with dihydroxyacetone-P.

It belongs to the DeoC/FbaB aldolase family. Homodecamer (dimer of pentamers).

Its subcellular location is the cytoplasm. It catalyses the reaction beta-D-fructose 1,6-bisphosphate = D-glyceraldehyde 3-phosphate + dihydroxyacetone phosphate. With respect to regulation, activated by citrate. In terms of biological role, catalyzes the reversible cleavage of fructose 1,6-bisphosphate (FBP) to glyceraldehyde 3-phosphate (GAP) and dihydroxyacetone phosphate (DHAP). In Thermoproteus tenax (strain ATCC 35583 / DSM 2078 / JCM 9277 / NBRC 100435 / Kra 1), this protein is Fructose-bisphosphate aldolase class 1 (fba).